A 367-amino-acid chain; its full sequence is Glutamate 5-kinase (367 aa).

Residue Lys-10 coordinates ATP. The substrate site is built by Ser-50, Asp-137, and Asn-149. Residues 169 to 170 (TD) and 211 to 217 (TGGMETK) each bind ATP. The PUA domain maps to 275–353 (AGDITVDDGA…QDISDILGYE (79 aa)).

This sequence belongs to the glutamate 5-kinase family.

It is found in the cytoplasm. It carries out the reaction L-glutamate + ATP = L-glutamyl 5-phosphate + ADP. Its pathway is amino-acid biosynthesis; L-proline biosynthesis; L-glutamate 5-semialdehyde from L-glutamate: step 1/2. Functionally, catalyzes the transfer of a phosphate group to glutamate to form L-glutamate 5-phosphate. This Sodalis glossinidius (strain morsitans) protein is Glutamate 5-kinase.